The sequence spans 141 residues: Hemoglobin subunit beta (141 aa).

The Globin domain maps to 2–141; that stretch reads HWSEVELHEI…VVDAISKEYH (140 aa). 2 residues coordinate heme b: His58 and His87.

It belongs to the globin family. As to quaternary structure, heterotetramer of two alpha chains and two beta chains. In terms of tissue distribution, red blood cells.

Involved in oxygen transport from the lung to the various peripheral tissues. The protein is Hemoglobin subunit beta (HBB) of Heterodontus portusjacksoni (Port Jackson shark).